The chain runs to 273 residues: tRNA pseudouridine synthase A (273 aa).

Aspartate 52 (nucleophile) is an active-site residue. Substrate is bound at residue tyrosine 110.

Belongs to the tRNA pseudouridine synthase TruA family. Homodimer.

The enzyme catalyses uridine(38/39/40) in tRNA = pseudouridine(38/39/40) in tRNA. Functionally, formation of pseudouridine at positions 38, 39 and 40 in the anticodon stem and loop of transfer RNAs. The sequence is that of tRNA pseudouridine synthase A from Cupriavidus pinatubonensis (strain JMP 134 / LMG 1197) (Cupriavidus necator (strain JMP 134)).